Here is a 438-residue protein sequence, read N- to C-terminus: Coenzyme A disulfide reductase (438 aa).

8–33 (GAVAGGATCASQIRRLDKESDIIIFE) lines the FAD pocket. Substrate-binding residues include T15, Q19, R22, S39, and N42. The Nucleophile role is filled by C43. Catalysis depends on C43, which acts as the Redox-active. Position 71 (K71) interacts with substrate. An NADP(+)-binding site is contributed by 151–166 (VLVIGAGYVSLEVLEN). Residue 267–277 (TNVPNIYAIGD) participates in FAD binding. H299 provides a ligand contact to substrate. Y419 contributes to the FAD binding site. K427 provides a ligand contact to substrate.

The protein belongs to the class-III pyridine nucleotide-disulfide oxidoreductase family. As to quaternary structure, homodimer. Requires FAD as cofactor.

The enzyme catalyses NADP(+) + 2 CoA = CoA-disulfide + NADPH + H(+). Functionally, catalyzes specifically the NADPH-dependent reduction of coenzyme A disulfide. In Staphylococcus aureus (strain JH1), this protein is Coenzyme A disulfide reductase.